We begin with the raw amino-acid sequence, 765 residues long: Lysyl oxidase homolog 2 (765 aa).

The N-terminal stretch at 1–19 (MLVSHVFLLTLSLSVPSLG) is a signal peptide. 4 consecutive SRCR domains span residues 49 to 150 (VRLA…VQCS), 179 to 293 (IRPI…VSCT), 317 to 416 (VRLR…VRCN), and 426 to 535 (VRLS…VSCV). Disulfide bonds link Cys75-Cys139, Cys88-Cys149, Cys119-Cys129, Cys209-Cys282, Cys222-Cys292, Cys256-Cys266, Cys342-Cys405, Cys355-Cys415, and Cys386-Cys396. Asn279 is a glycosylation site (N-linked (GlcNAc...) asparagine). N-linked (GlcNAc...) asparagine glycosylation occurs at Asn446. Cystine bridges form between Cys455–Cys521, Cys468–Cys534, and Cys502–Cys512. A lysyl-oxidase like region spans residues 539-742 (PDLVLNAALV…WMYNCHIGGS (204 aa)). Positions 540 and 541 each coordinate Ca(2+). Intrachain disulfides connect Cys564–Cys616, Cys570–Cys686, Cys648–Cys664, and Cys654–Cys676. His617, His619, and His621 together coordinate Cu cation. N-linked (GlcNAc...) asparagine glycosylation is present at Asn635. A cross-link (lysine tyrosylquinone (Lys-Tyr)) is located at residues 644–680 (KASFCLEDSECEADIQKQYVCANFGEQGITVGCWDLY). Tyr680 is modified (2',4',5'-topaquinone). Ca(2+)-binding residues include Glu713, Asp715, Asn718, and Asn719. Cys723 and Cys737 form a disulfide bridge.

It belongs to the lysyl oxidase family. Requires Cu cation as cofactor. Lysine tyrosylquinone residue is required as a cofactor. The lysine tyrosylquinone cross-link (LTQ) is generated by condensation of the epsilon-amino group of a lysine with a topaquinone produced by oxidation of tyrosine.

The protein localises to the secreted. Its subcellular location is the extracellular space. It is found in the extracellular matrix. It localises to the basement membrane. The protein resides in the nucleus. The protein localises to the chromosome. Its subcellular location is the endoplasmic reticulum. The enzyme catalyses L-lysyl-[protein] + O2 + H2O = (S)-2-amino-6-oxohexanoyl-[protein] + H2O2 + NH4(+). Its function is as follows. Mediates the post-translational oxidative deamination of lysine residues on target proteins leading to the formation of deaminated lysine (allysine). Acts as a transcription corepressor and specifically mediates deamination of trimethylated 'Lys-4' of histone H3 (H3K4me3), a specific tag for epigenetic transcriptional activation. Shows no activity against histone H3 when it is trimethylated on 'Lys-9' (H3K9me3) or 'Lys-27' (H3K27me3) or when 'Lys-4' is monomethylated (H3K4me1) or dimethylated (H3K4me2). Also mediates deamination of methylated TAF10, a member of the transcription factor IID (TFIID) complex, which induces release of TAF10 from promoters, leading to inhibition of TFIID-dependent transcription. LOXL2-mediated deamination of TAF10 results in transcriptional repression of genes required for embryonic stem cell pluripotency. Involved in epithelial to mesenchymal transition (EMT) and participates in repression of E-cadherin, probably by mediating deamination of histone H3. When secreted into the extracellular matrix, promotes cross-linking of extracellular matrix proteins by mediating oxidative deamination of peptidyl lysine residues in precursors to fibrous collagen and elastin. Acts as a regulator of sprouting angiogenesis, probably via collagen IV scaffolding. Acts as a regulator of chondrocyte differentiation, probably by regulating expression of factors that control chondrocyte differentiation. This Xenopus laevis (African clawed frog) protein is Lysyl oxidase homolog 2 (loxl2).